We begin with the raw amino-acid sequence, 483 residues long: FAD-linked oxidoreductase easE (483 aa).

An FAD-binding PCMH-type domain is found at 10-193; the sequence is QGRLPFYSAV…TEATVRVFSD (184 aa).

The protein belongs to the oxygen-dependent FAD-linked oxidoreductase family. The cofactor is FAD.

Its pathway is alkaloid biosynthesis; ergot alkaloid biosynthesis. Functionally, FAD-linked oxidoreductase; part of the gene cluster that mediates the biosynthesis of fungal ergot alkaloid. DmaW catalyzes the first step of ergot alkaloid biosynthesis by condensing dimethylallyl diphosphate (DMAP) and tryptophan to form 4-dimethylallyl-L-tryptophan. The second step is catalyzed by the methyltransferase easF that methylates 4-dimethylallyl-L-tryptophan in the presence of S-adenosyl-L-methionine, resulting in the formation of 4-dimethylallyl-L-abrine. The catalase easC and the FAD-dependent oxidoreductase easE then transform 4-dimethylallyl-L-abrine to chanoclavine-I which is further oxidized by easD in the presence of NAD(+), resulting in the formation of chanoclavine-I aldehyde. Agroclavine dehydrogenase easG then mediates the conversion of chanoclavine-I aldehyde to agroclavine via a non-enzymatic adduct reaction: the substrate is an iminium intermediate that is formed spontaneously from chanoclavine-I aldehyde in the presence of glutathione. The presence of easA is not required to complete this reaction. Further conversion of agroclavine to paspalic acid is a two-step process involving oxidation of agroclavine to elymoclavine and of elymoclavine to paspalic acid, the second step being performed by the elymoclavine oxidase cloA. Paspalic acid is then further converted to D-lysergic acid. Ergopeptines are assembled from D-lysergic acid and three different amino acids by the D-lysergyl-peptide-synthetases composed each of a monomudular and a trimodular nonribosomal peptide synthetase subunit. LpsB and lpsC encode the monomodular subunits responsible for D-lysergic acid activation and incorporation into the ergopeptine backbone. LpsA1 and A2 subunits encode the trimodular nonribosomal peptide synthetase assembling the tripeptide portion of ergopeptines. LpsA1 is responsible for formation of the major ergopeptine, ergotamine, and lpsA2 for alpha-ergocryptine, the minor ergopeptine of the total alkaloid mixture elaborated by C.purpurea. D-lysergyl-tripeptides are assembled by the nonribosomal peptide synthetases and released as N-(D-lysergyl-aminoacyl)-lactams. Cyclolization of the D-lysergyl-tripeptides is performed by the Fe(2+)/2-ketoglutarate-dependent dioxygenase easH which introduces a hydroxyl group into N-(D-lysergyl-aminoacyl)-lactam at alpha-C of the aminoacyl residue followed by spontaneous condensation with the terminal lactam carbonyl group. The protein is FAD-linked oxidoreductase easE of Claviceps purpurea (strain 20.1) (Ergot fungus).